Here is an 878-residue protein sequence, read N- to C-terminus: Leucine--tRNA ligase (878 aa).

Positions 56 to 66 (PYPSGKLHMGH) match the 'HIGH' region motif. The 'KMSKS' region motif lies at 630 to 634 (KMSKS). An ATP-binding site is contributed by Lys-633.

It belongs to the class-I aminoacyl-tRNA synthetase family.

The protein resides in the cytoplasm. It carries out the reaction tRNA(Leu) + L-leucine + ATP = L-leucyl-tRNA(Leu) + AMP + diphosphate. In Prochlorococcus marinus (strain MIT 9313), this protein is Leucine--tRNA ligase.